The primary structure comprises 873 residues: MSFIMKLHRHFQRTVILLATFCMVSIIISAYYLYSGYKQENELSETASEVDCGDLQHLPYQLMEVKAMKLFDASRTDPTVLVFVESQYSSLGQDIIMILESSRFQYHIEIAPGKGDLPVLIDKMKGKYILIIYENILKYINMDSWNRSLLDKYCVEYGVGVIGFHKTSEKSVQSFQLKGFPFSIYGNLAVKDCCINPHSPLIRVTKSSKLEKGSLPGTDWTVFQINHSAYQPVIFAKVKTPENLSPSISKGAFYATIIHDLGLHDGIQRVLFGNNLNFWLHKLIFIDAISFLSGKRLTLSLDRYILVDIDDIFVGKEGTRMNTNDVKALLDTQNLLRAQITNFTFNLGFSGKFYHTGTEEEDEGDDCLLGSVDEFWWFPHMWSHMQPHLFHNESSLVEQMILNKKFALEHGIPTDMGYAVAPHHSGVYPVHVQLYEAWKKVWNIKITSTEEYPHLKPARYRRGFIHKNIMVLPRQTCGLFTHTIFYKEYPGGPKELDKSIQGGELFFTVVLNPISIFMTHLSNYGNDRLGLYTFVNLANFVKSWTNLRLQTLPPVQLAHKYFELFPDQKDPLWQNPCDDKRHRDIWSKEKTCDRLPKFLVIGPQKTGTTALYLFLVMHPSILSNSPSPKTFEEVQFFNRNNYHRGIDWYMDFFPVPSNVTTDFLFEKSANYFHSEEAPKRAASLVPKAKIITILIDPSDRAYSWYQHQRSHEDPAALKFSFYEVISAGPRAPSELRALQKRCLVPGWYASHIERWLVYFPPFQLLIIDGQQLRTDPATVMDEVQKFLGVLPHYNYSEALTFDSHKGFWCQLLEEGKTKCLGKSKGRKYPPMDSDSRTFLSSYYRDHNVELSKLLHKLGQPLPSWLRQELQKVR.

At 1–13 the chain is on the cytoplasmic side; the sequence is MSFIMKLHRHFQR. Residues 14–34 traverse the membrane as a helical; Signal-anchor for type II membrane protein segment; sequence TVILLATFCMVSIIISAYYLY. Residues 35-873 lie on the Lumenal side of the membrane; sequence SGYKQENELS…WLRQELQKVR (839 aa). A heparan sulfate N-deacetylase 3 region spans residues 36–589; sequence GYKQENELSE…KRHRDIWSKE (554 aa). 4 N-linked (GlcNAc...) asparagine glycosylation sites follow: Asn-146, Asn-226, Asn-342, and Asn-392. A heparan sulfate N-sulfotransferase 3 region spans residues 590-873; that stretch reads KTCDRLPKFL…WLRQELQKVR (284 aa). Catalysis depends on Lys-605, which acts as the For sulfotransferase activity. Residue 605–609 participates in 3'-phosphoadenylyl sulfate binding; that stretch reads KTGTT. A glycan (N-linked (GlcNAc...) asparagine) is linked at Asn-658. Ser-703 provides a ligand contact to 3'-phosphoadenylyl sulfate. N-linked (GlcNAc...) asparagine glycosylation occurs at Asn-794. A disulfide bridge links Cys-809 with Cys-819. Position 824 to 828 (824 to 828) interacts with 3'-phosphoadenylyl sulfate; it reads KGRKY.

This sequence belongs to the sulfotransferase 1 family. NDST subfamily. In terms of assembly, monomer. As to expression, expressed in brain, kidney, liver, fetal and adult lung, adult pancreas, placenta, fetal spleen and fetal thymus. Not detected in adult/ fetal heart and skeletal muscle.

The protein localises to the golgi apparatus membrane. The enzyme catalyses alpha-D-glucosaminyl-[heparan sulfate](n) + 3'-phosphoadenylyl sulfate = N-sulfo-alpha-D-glucosaminyl-[heparan sulfate](n) + adenosine 3',5'-bisphosphate + 2 H(+). The protein operates within glycan metabolism; heparan sulfate biosynthesis. Its pathway is glycan metabolism; heparin biosynthesis. Functionally, essential bifunctional enzyme that catalyzes both the N-deacetylation and the N-sulfation of glucosamine (GlcNAc) of the glycosaminoglycan in heparan sulfate. Modifies the GlcNAc-GlcA disaccharide repeating sugar backbone to make N-sulfated heparosan, a prerequisite substrate for later modifications in heparin biosynthesis. Has high deacetylase activity but low sulfotransferase activity. This chain is Bifunctional heparan sulfate N-deacetylase/N-sulfotransferase 3, found in Homo sapiens (Human).